The following is a 120-amino-acid chain: Galanin-like peptide (120 aa).

The first 22 residues, 1 to 22 (MALTVPLIVLAVLLSLMESPAS), serve as a signal peptide directing secretion. A propeptide spanning residues 85-120 (SLGETFAKPDSGVTFVGVPDVVPWKRIRPGTTRFQI) is cleaved from the precursor.

Belongs to the galanin family.

The protein localises to the secreted. Its function is as follows. Hypothalamic neuropeptide which binds to the G-protein-coupled galanin receptors (GALR1, GALR2 and GALR3). Involved in a large number of putative physiological functions in CNS homeostatic processes, including the regulation of gonadotropin-releasing hormone secretion. This chain is Galanin-like peptide (GALP), found in Sus scrofa (Pig).